The sequence spans 214 residues: Pyridoxine/pyridoxamine 5'-phosphate oxidase (214 aa).

Substrate is bound by residues 9–12 and K67; that span reads RKDY. FMN-binding positions include 62 to 67, 77 to 78, R83, K84, and Q106; these read RMVLLK and FT. Residues Y124, R128, and S132 each coordinate substrate. FMN contacts are provided by residues 141–142 and W186; that span reads QS. 192–194 serves as a coordination point for substrate; sequence RLH. R196 contributes to the FMN binding site.

It belongs to the pyridoxamine 5'-phosphate oxidase family. As to quaternary structure, homodimer. FMN serves as cofactor.

The enzyme catalyses pyridoxamine 5'-phosphate + O2 + H2O = pyridoxal 5'-phosphate + H2O2 + NH4(+). The catalysed reaction is pyridoxine 5'-phosphate + O2 = pyridoxal 5'-phosphate + H2O2. The protein operates within cofactor metabolism; pyridoxal 5'-phosphate salvage; pyridoxal 5'-phosphate from pyridoxamine 5'-phosphate: step 1/1. It functions in the pathway cofactor metabolism; pyridoxal 5'-phosphate salvage; pyridoxal 5'-phosphate from pyridoxine 5'-phosphate: step 1/1. In terms of biological role, catalyzes the oxidation of either pyridoxine 5'-phosphate (PNP) or pyridoxamine 5'-phosphate (PMP) into pyridoxal 5'-phosphate (PLP). This Nostoc punctiforme (strain ATCC 29133 / PCC 73102) protein is Pyridoxine/pyridoxamine 5'-phosphate oxidase.